Here is a 193-residue protein sequence, read N- to C-terminus: Peptidyl-tRNA hydrolase (193 aa).

Y21 lines the tRNA pocket. The active-site Proton acceptor is the H26. Residues Y72, N74, and N120 each coordinate tRNA.

The protein belongs to the PTH family. Monomer.

It localises to the cytoplasm. It catalyses the reaction an N-acyl-L-alpha-aminoacyl-tRNA + H2O = an N-acyl-L-amino acid + a tRNA + H(+). Its function is as follows. Hydrolyzes ribosome-free peptidyl-tRNAs (with 1 or more amino acids incorporated), which drop off the ribosome during protein synthesis, or as a result of ribosome stalling. In terms of biological role, catalyzes the release of premature peptidyl moieties from peptidyl-tRNA molecules trapped in stalled 50S ribosomal subunits, and thus maintains levels of free tRNAs and 50S ribosomes. The polypeptide is Peptidyl-tRNA hydrolase (Nocardia farcinica (strain IFM 10152)).